The primary structure comprises 299 residues: NmrA-like family domain-containing protein 1 (299 aa).

Residues 11 to 16 (GGTGAQ), 37 to 41 (RNPRK), 58 to 59 (DQ), Gln-62, 79 to 81 (TNY), Lys-92, Lys-133, and 155 to 158 (YFEN) contribute to the NADP(+) site. The tract at residues 153-189 (PCYFENLLSHFLPQKAPDGKSYLLSLPTGDVPMDGMS) is interaction with ASS1.

Belongs to the NmrA-type oxidoreductase family. Homodimer. Interacts with ASS1. Interaction is enhanced by low NADPH/NADP(+) ratios, which results in inhibition of ASS1 activity.

The protein resides in the cytoplasm. Its subcellular location is the perinuclear region. It localises to the nucleus. Redox sensor protein. Undergoes restructuring and subcellular redistribution in response to changes in intracellular NADPH/NADP(+) levels. At low NADPH concentrations the protein is found mainly as a monomer, and binds argininosuccinate synthase (ASS1), the enzyme involved in nitric oxide synthesis. Association with ASS1 impairs its activity and reduces the production of nitric oxide, which subsecuently prevents apoptosis. Under normal NADPH concentrations, the protein is found as a dimer and hides the binding site for ASS1. The homodimer binds one molecule of NADPH. Has higher affinity for NADPH than for NADP(+). Binding to NADPH is necessary to form a stable dimer. This chain is NmrA-like family domain-containing protein 1 (NMRAL1), found in Homo sapiens (Human).